Reading from the N-terminus, the 133-residue chain is Global transcriptional regulator Spx (133 aa).

An intrachain disulfide couples Cys10 to Cys13.

The protein belongs to the ArsC family. Spx subfamily. Interacts with the C-terminal domain of the alpha subunit of the RNAP.

Its subcellular location is the cytoplasm. Global transcriptional regulator that plays a key role in stress response and exerts either positive or negative regulation of genes. Acts by interacting with the C-terminal domain of the alpha subunit of the RNA polymerase (RNAP). This interaction can enhance binding of RNAP to the promoter region of target genes and stimulate their transcription, or block interaction of RNAP with activator. This chain is Global transcriptional regulator Spx, found in Streptococcus pneumoniae serotype 4 (strain ATCC BAA-334 / TIGR4).